We begin with the raw amino-acid sequence, 327 residues long: MADPIRVAVTGAAGQIAYSLLVRLASGQLFGKDRKVELKLLEIPQAMGPLEGVMMELQDCAFPTLAKVEAFDNPEQAFDGINWCLMVGSRPRGPGMERSDLIKINGPIFVNQGKALNRAAQDVRAVVVGNPCNTNCMIAAHNSDVPHERFSAMMRLDQNRAKYLLASKAGAQVIDVTNVVIWGNHSNNQVPDFEFAKIGGKPVPEVIADAAWLENAFMPTVQNRGAAVIKARGASSAASAANAALDHVRSLITPTPAGDTFCAAVMANGAYGVDAGLIAGMPLTSTGHGDWSIVEGVPMSPFIKGKFDAVLDELRREREMVKDLLPG.

11 to 17 is an NAD(+) binding site; that stretch reads GAAGQIA. 2 residues coordinate substrate: Arg92 and Arg98. NAD(+) contacts are provided by residues Asn105, Gln112, and 128–130; that span reads VGN. Residues Asn130 and Arg160 each contribute to the substrate site. His185 serves as the catalytic Proton acceptor.

This sequence belongs to the LDH/MDH superfamily. MDH type 2 family.

The catalysed reaction is (S)-malate + NAD(+) = oxaloacetate + NADH + H(+). Its function is as follows. Catalyzes the reversible oxidation of malate to oxaloacetate. This Magnetococcus marinus (strain ATCC BAA-1437 / JCM 17883 / MC-1) protein is Malate dehydrogenase.